We begin with the raw amino-acid sequence, 494 residues long: Adenosylhomocysteinase (494 aa).

Substrate-binding residues include T72, D155, and E217. Residue 218–220 (TTT) coordinates NAD(+). Substrate contacts are provided by K247 and D251. NAD(+) contacts are provided by residues N252, 281–286 (GYGDVG), E304, N339, 360–362 (IGH), and N408.

Belongs to the adenosylhomocysteinase family. NAD(+) is required as a cofactor.

It is found in the cytoplasm. The enzyme catalyses S-adenosyl-L-homocysteine + H2O = L-homocysteine + adenosine. Its pathway is amino-acid biosynthesis; L-homocysteine biosynthesis; L-homocysteine from S-adenosyl-L-homocysteine: step 1/1. May play a key role in the regulation of the intracellular concentration of adenosylhomocysteine. This chain is Adenosylhomocysteinase, found in Nocardia farcinica (strain IFM 10152).